The primary structure comprises 112 residues: Nucleoid-associated protein lpp2803 (112 aa).

The protein belongs to the YbaB/EbfC family. As to quaternary structure, homodimer.

It is found in the cytoplasm. Its subcellular location is the nucleoid. Its function is as follows. Binds to DNA and alters its conformation. May be involved in regulation of gene expression, nucleoid organization and DNA protection. The polypeptide is Nucleoid-associated protein lpp2803 (Legionella pneumophila (strain Paris)).